Here is an 850-residue protein sequence, read N- to C-terminus: MSGSVWDIEGLLCEDDIPYEQEVAKNPNNLSNWLRYYRFKSSTSSCTFQNRVFILERAVKQLPRSYKLWMIYIDVVLQEVQTSVSYKSKSEILSVNMVFERSLQLLNRAPILWIKYLEFLVETQPYEITLLRRKFNECLYNLPISQHHLIWPLYIRFADDVGGMTGVKVYLKYLQYANPESLQGLNNEQEGELGITIDDIISKLVEFGDVKEASKLFQHILQHTDKFIGLSKSPLQLWIEYIDLLVNSVSKNKRSTVNYNEFDYFFEKLIKDGLQKFPDQIGKFYLKLTFYFIKRKNLFKARYYFDEGLKTCVSVKDFTMIFDSYTEFEENILTNMSEKLEKLGEDSDLNNELDLRMNVFEKLINDRPYLLNDMMLRQDVNNLDEWFKKIVLYKKDSDINMMLDTYAAALRTINPLKAHSLANKKENTLPNLWINYANVYASQNDVKTANLIFSKSVKSQFQSPDDLATLYIEWCELFVKHNDDKKAIEIVEDICTSERGKFDYNDSSIDIHIRVQKSIKLWSFYLDLLESMIENNNQIDEIEKVINAYNITIDLKIATPLTIINFANFLEEWNFYERSFSAYEMGLKIFKDSKIKFEIWNIYLSKIIKHELNIERIRDLFEQCLNESSIEGYNGCPANLCKPVYLLYSQYEQSKGWFTKSVKILQQGLSKLDDGYNQEFYTKAEKDTILRDKFDIYQVLISKILKLNDHNETRKIYEQSLKDNQLTLPNLIQLTMEFINFETELMEFNRVRSLFKYVCQLSNPQSPLIEPIWHNWETFELNHGNEATFKDMLRFKRKIVTEFEKDIILKNSLNPMGFVKSSQGPKVSSIAISAPKEENNPDSIDLDMDM.

12 HAT repeats span residues 10–42 (GLLC…FKSS), 46–78 (CTFQ…VVLQ), 90–122 (SEIL…FLVE), 126–160 (YEIT…FADD), 208–247 (GDVK…LLVN), 408–442 (AALR…VYAS), 444–480 (NDVK…LFVK), 500–531 (GKFD…LLES), 574–609 (NFYE…KIIK), 612–653 (LNIE…QYEQ), 708–744 (NDHN…FETE), and 746–782 (MEFN…FELN).

This sequence belongs to the crooked-neck family. In terms of assembly, associated with the spliceosome.

Its subcellular location is the nucleus. Its function is as follows. Involved in pre-mRNA splicing and cell cycle progression. The polypeptide is Pre-mRNA-splicing factor SYF1 (SYF1) (Debaryomyces hansenii (strain ATCC 36239 / CBS 767 / BCRC 21394 / JCM 1990 / NBRC 0083 / IGC 2968) (Yeast)).